We begin with the raw amino-acid sequence, 893 residues long: DNA mismatch repair protein MutS (893 aa).

638 to 645 (GPNMAGKS) serves as a coordination point for ATP.

It belongs to the DNA mismatch repair MutS family.

In terms of biological role, this protein is involved in the repair of mismatches in DNA. It is possible that it carries out the mismatch recognition step. This protein has a weak ATPase activity. The protein is DNA mismatch repair protein MutS of Lawsonia intracellularis (strain PHE/MN1-00).